A 649-amino-acid chain; its full sequence is Stress-70 protein, mitochondrial (649 aa).

The transit peptide at 1 to 46 (MISASRAAAARLVGAAASRGPTAARHKDGWNGLSHEAFRIVSRRDY) directs the protein to the mitochondrion. Residues 1-432 (MISASRAAAA…IQGGVLAGDV (432 aa)) form an interaction with NFS1 region. ADP contacts are provided by Thr-63 and Asn-64. The nucleotide-binding domain (NBD) stretch occupies residues 63 to 431 (TNSCVAVMEG…AIQGGVLAGD (369 aa)). Lys-76 carries the post-translational modification N6-acetyllysine. Thr-87 is modified (phosphothreonine). 2 positions are modified to N6-acetyllysine; alternate: Lys-135 and Lys-138. Residues Lys-135 and Lys-138 each carry the N6-succinyllysine; alternate modification. Residue Lys-143 is modified to N6-acetyllysine. Lys-206 bears the N6-acetyllysine; alternate mark. Lys-206 is subject to N6-succinyllysine; alternate. The residue at position 206 (Lys-206) is an N6-malonyllysine; alternate. Lys-234 and Lys-288 each carry N6-acetyllysine. At Lys-300 the chain carries N6-acetyllysine; alternate. Lys-300 is subject to N6-succinyllysine; alternate. Residues Glu-313, Lys-316, and Ser-320 each coordinate ADP. Residue Lys-368 is modified to N6-succinyllysine. Positions 388 and 391 each coordinate ADP. Lys-394 carries the post-translational modification N6-succinyllysine. Ser-408 carries the post-translational modification Phosphoserine. The tract at residues 432 to 441 (VTDVLLLDVT) is interdomain linker. N6-acetyllysine; alternate occurs at positions 565, 598, and 638. An N6-succinyllysine; alternate mark is found at Lys-565, Lys-598, and Lys-638.

This sequence belongs to the heat shock protein 70 family. In terms of assembly, interacts strongly with the intermediate form of FXN and weakly with its mature form. Interacts with HSCB. Associates with the mitochondrial contact site and cristae organizing system (MICOS) complex, composed of at least MICOS10/MIC10, CHCHD3/MIC19, CHCHD6/MIC25, APOOL/MIC27, IMMT/MIC60, APOO/MIC23/MIC26 and QIL1/MIC13. This complex was also known under the names MINOS or MitOS complex. The MICOS complex associates with mitochondrial outer membrane proteins SAMM50, MTX1, MTX2 and DNAJC11, mitochondrial inner membrane protein TMEM11 and with HSPA9. Interacts with DNLZ, the interaction is required to prevent self-aggregation. Interacts with TESPA1. Interacts with PDPN. Interacts with NFU1, NFS1 and ISCU. Interacts with TP53; the interaction promotes TP53 degradation. Interacts (via SBD domain) with UBXN2A; the interaction with UBXN2A inhibits HSPA9/MOT-2 interaction with and degradation of TP53, thereby promotes TP53 translocation to the nucleus. Interacts with ITPR1 AND VDAC1; this interaction couples ITPR1 to VDAC1. Component of the TIM23 mitochondrial inner membrane pre-sequence translocase complex.

It localises to the mitochondrion. Its subcellular location is the nucleus. The protein localises to the nucleolus. The protein resides in the cytoplasm. It is found in the mitochondrion matrix. It catalyses the reaction ATP + H2O = ADP + phosphate + H(+). Its activity is regulated as follows. The chaperone activity is regulated by ATP-induced allosteric coupling of the nucleotide-binding (NBD) and substrate-binding (SBD) domains. ATP binding in the NBD leads to a conformational change in the NBD, which is transferred through the interdomain linker (IDL) to the substrate-binding domain (SBD). This elicits a reduced substrate affinity and a faster substrate exchange rate. Upon hydrolysis of ATP to ADP, the protein undergoes a conformational change that increases its affinity for substrate proteins. It cycles through repeated phases of ATP hydrolysis and nucleotide exchange, facilitating repeated cycles of substrate binding and release. Functions in collaboration with co-chaperones. Functions with the co-chaperone, DNLZ, to maintain solubility and regulate ATP hydrolysis. Nucleotide exchange factors, GRPEL1 and GRPEL2, accelerate nucleotide exchange. Its function is as follows. Mitochondrial chaperone that plays a key role in mitochondrial protein import, folding, and assembly. Plays an essential role in the protein quality control system, the correct folding of proteins, the re-folding of misfolded proteins, and the targeting of proteins for subsequent degradation. These processes are achieved through cycles of ATP binding, ATP hydrolysis, and ADP release, mediated by co-chaperones. In mitochondria, it associates with the TIM (translocase of the inner membrane) protein complex to assist in the import and folding of mitochondrial proteins. Plays an important role in mitochondrial iron-sulfur cluster (ISC) biogenesis, interacts with and stabilizes ISC cluster assembly proteins FXN, NFU1, NFS1 and ISCU. Regulates erythropoiesis via stabilization of ISC assembly. Regulates mitochondrial calcium-dependent apoptosis by coupling two calcium channels, ITPR1 and VDAC1, at the mitochondria-associated endoplasmic reticulum (ER) membrane to facilitate calcium transport from the ER lumen to the mitochondria intermembrane space, providing calcium for the downstream calcium channel MCU, which releases it into the mitochondrial matrix. Although primarily located in the mitochondria, it is also found in other cellular compartments. In the cytosol, it associates with proteins involved in signaling, apoptosis, or senescence. It may play a role in cell cycle regulation via its interaction with and promotion of degradation of TP53. May play a role in the control of cell proliferation and cellular aging. Protects against reactive oxygen species (ROS). Extracellular HSPA9 plays a cytoprotective role by preventing cell lysis following immune attack by the membrane attack complex by disrupting formation of the complex. This Canis lupus familiaris (Dog) protein is Stress-70 protein, mitochondrial.